Here is a 530-residue protein sequence, read N- to C-terminus: MYLVTAAEMGQLDRLASSEYMIPSIVLMENAGLRVVESIERHFQGQVANRRILIFCGKGNNGGDGLVVARHLLNRGAEVKVFLLARPEDIRGDARTNLEIYQKMGGKLLLLLGESHLQRADIALLYADLVVDAIFGTGFKGAAMGLPAAVINMINKAHRETVAVDLPSGLEADTGRCFGPCIQATWTVTFALPKLGLVVEPGASLTGRLEVADIGIPQKLVATQHFNRRLLTAAWCRSQLPRREASGHKGLYGRVLAVGGSPGLTGAITLAATAALKAGAGLVTAAVPRGVQGILAMKTTEIMTMSLPETPAGALSRDALDPLLERLAEVDVLAIGPGLSRDPATVDLVKELLPRVQVPAVVDADALNALATDTRVLTGDHGPLVLTPHPGEMARLLGTTAAKIQEDRLEIAAKYAREWQAVLLLKGARTVIAWPDGQVYINPTGNPGMATAGSGDVLTGIIAGLAGQGLKPGVAAALGAYLHGAAGDEAARQRGQRAMMAGDLLDFLPYVLRNLEEEVETIVAAGLGRD.

The tract at residues 1 to 224 (MYLVTAAEMG…GIPQKLVATQ (224 aa)) is NAD(P)H-hydrate epimerase. The 214-residue stretch at 9–222 (MGQLDRLASS…DIGIPQKLVA (214 aa)) folds into the YjeF N-terminal domain. An NADPHX 1; for epimerase activity region spans residues 60 to 64 (NNGGD). Positions 61 and 132 each coordinate K(+). An NADPHX 1; for epimerase activity region spans residues 136 to 142 (GTGFKGA). Asp-165 is a binding site for (6S)-NADPHX. Ser-168 provides a ligand contact to K(+). A YjeF C-terminal domain is found at 232–515 (TAAWCRSQLP…DFLPYVLRNL (284 aa)). An ADP-dependent (S)-NAD(P)H-hydrate dehydratase region spans residues 232 to 530 (TAAWCRSQLP…TIVAAGLGRD (299 aa)). Gly-338 serves as a coordination point for (6S)-NADPHX. The segment at 389-395 (HPGEMAR) is NADPHX 2; for dehydratase activity. ADP-binding positions include 426–430 (KGART) and 446–455 (NPGMATAGSG). Asp-456 contacts (6S)-NADPHX.

In the N-terminal section; belongs to the NnrE/AIBP family. This sequence in the C-terminal section; belongs to the NnrD/CARKD family. Requires K(+) as cofactor.

It catalyses the reaction (6S)-NADHX + ADP = AMP + phosphate + NADH + H(+). The catalysed reaction is (6S)-NADPHX + ADP = AMP + phosphate + NADPH + H(+). The enzyme catalyses (6R)-NADHX = (6S)-NADHX. It carries out the reaction (6R)-NADPHX = (6S)-NADPHX. Functionally, bifunctional enzyme that catalyzes the epimerization of the S- and R-forms of NAD(P)HX and the dehydration of the S-form of NAD(P)HX at the expense of ADP, which is converted to AMP. This allows the repair of both epimers of NAD(P)HX, a damaged form of NAD(P)H that is a result of enzymatic or heat-dependent hydration. The sequence is that of Bifunctional NAD(P)H-hydrate repair enzyme Nnr (nnr) from Moorella thermoacetica (strain ATCC 39073 / JCM 9320).